A 247-amino-acid polypeptide reads, in one-letter code: Carboxy-S-adenosyl-L-methionine synthase (247 aa).

S-adenosyl-L-methionine is bound by residues Tyr40, 65–67 (GAS), 90–91 (DN), 122–123 (DI), Asn137, and Arg204.

The protein belongs to the class I-like SAM-binding methyltransferase superfamily. Cx-SAM synthase family. In terms of assembly, homodimer.

The enzyme catalyses prephenate + S-adenosyl-L-methionine = carboxy-S-adenosyl-L-methionine + 3-phenylpyruvate + H2O. Functionally, catalyzes the conversion of S-adenosyl-L-methionine (SAM) to carboxy-S-adenosyl-L-methionine (Cx-SAM). In Pseudomonas putida (strain W619), this protein is Carboxy-S-adenosyl-L-methionine synthase.